Reading from the N-terminus, the 694-residue chain is Polyribonucleotide nucleotidyltransferase (694 aa).

Mg(2+)-binding residues include aspartate 485 and aspartate 491. One can recognise a KH domain in the interval 552-611 (PRIETMQIKPNKIATVIGPGGKQIRQIIEEAGVQIDINDSGLVSISASSPQAIEKAKSII). The S1 motif domain maps to 621–689 (GKIYEGRVTS…EKGQYKLSHK (69 aa)).

This sequence belongs to the polyribonucleotide nucleotidyltransferase family. It depends on Mg(2+) as a cofactor.

It is found in the cytoplasm. The enzyme catalyses RNA(n+1) + phosphate = RNA(n) + a ribonucleoside 5'-diphosphate. Involved in mRNA degradation. Catalyzes the phosphorolysis of single-stranded polyribonucleotides processively in the 3'- to 5'-direction. This is Polyribonucleotide nucleotidyltransferase from Chlamydia felis (strain Fe/C-56) (Chlamydophila felis).